An 84-amino-acid chain; its full sequence is Large ribosomal subunit protein bL27 (84 aa).

The disordered stretch occupies residues 1–25; sequence MAHKKGQGSTQNNRDSAGRRLGVKK.

It belongs to the bacterial ribosomal protein bL27 family.

The protein is Large ribosomal subunit protein bL27 of Sulfurovum sp. (strain NBC37-1).